The sequence spans 666 residues: Phosphoenolpyruvate carboxykinase (ATP) (666 aa).

Disordered regions lie at residues 1–68 and 91–132; these read MATP…AHSP and ASLT…HPAA. Residues 48 to 58 are compositionally biased toward polar residues; the sequence is APTTPNRSAPT. The span at 109 to 123 shows a compositional bias: low complexity; sequence KGEAAAQGAPSTPRA. Position 364 to 371 (364 to 371) interacts with ATP; the sequence is GLSGTGKT.

Belongs to the phosphoenolpyruvate carboxykinase (ATP) family.

Its subcellular location is the cytoplasm. The enzyme catalyses oxaloacetate + ATP = phosphoenolpyruvate + ADP + CO2. It functions in the pathway carbohydrate biosynthesis; gluconeogenesis. This is Phosphoenolpyruvate carboxykinase (ATP) from Zea mays (Maize).